We begin with the raw amino-acid sequence, 251 residues long: Elongation factor Ts (251 aa).

An involved in Mg(2+) ion dislocation from EF-Tu region spans residues 82–85 (TDFV). The interval 215 to 251 (QMGQKAPEPVAAAPQVEEKAPEPAAKDNPPAKGKKKK) is disordered. Positions 219 to 229 (KAPEPVAAAPQ) are enriched in low complexity. The segment covering 230–239 (VEEKAPEPAA) has biased composition (basic and acidic residues).

Belongs to the EF-Ts family.

The protein resides in the cytoplasm. In terms of biological role, associates with the EF-Tu.GDP complex and induces the exchange of GDP to GTP. It remains bound to the aminoacyl-tRNA.EF-Tu.GTP complex up to the GTP hydrolysis stage on the ribosome. This chain is Elongation factor Ts, found in Microcystis aeruginosa (strain NIES-843 / IAM M-2473).